Reading from the N-terminus, the 241-residue chain is Octanoyltransferase (241 aa).

The BPL/LPL catalytic domain occupies 38–227 (AGGPDTLLLL…AVCNALDGAL (190 aa)). Substrate is bound by residues 85-92 (RGGKITWH), 157-159 (AIG), and 170-172 (GFA). The active-site Acyl-thioester intermediate is C188.

The protein belongs to the LipB family.

The protein localises to the cytoplasm. The enzyme catalyses octanoyl-[ACP] + L-lysyl-[protein] = N(6)-octanoyl-L-lysyl-[protein] + holo-[ACP] + H(+). It functions in the pathway protein modification; protein lipoylation via endogenous pathway; protein N(6)-(lipoyl)lysine from octanoyl-[acyl-carrier-protein]: step 1/2. Functionally, catalyzes the transfer of endogenously produced octanoic acid from octanoyl-acyl-carrier-protein onto the lipoyl domains of lipoate-dependent enzymes. Lipoyl-ACP can also act as a substrate although octanoyl-ACP is likely to be the physiological substrate. The polypeptide is Octanoyltransferase (Mycobacterium ulcerans (strain Agy99)).